We begin with the raw amino-acid sequence, 705 residues long: Translation initiation factor IF-2 (705 aa).

A disordered region spans residues 40–124; that stretch reads DDQIKALDKK…QPAAPKEIPS (85 aa). Positions 41 to 58 are enriched in basic and acidic residues; it reads DQIKALDKKFKKEQKNDN. Residues 59–77 show a composition bias toward low complexity; the sequence is KQSTQNNHQKSNNQNQNKG. Residues 94–108 show a composition bias toward basic residues; the sequence is KGNKKNNRNNKKNNK. In terms of domain architecture, tr-type G spans 207–376; sequence ERPAVVTIMG…GLVAEVQELK (170 aa). Positions 216 to 223 are G1; sequence GHVDHGKT. 216 to 223 contributes to the GTP binding site; the sequence is GHVDHGKT. Residues 241–245 are G2; sequence GITQH. Residues 262-265 are G3; it reads DTPG. GTP-binding positions include 262-266 and 316-319; these read DTPGH and NKID. The tract at residues 316–319 is G4; sequence NKID. A G5 region spans residues 352-354; that stretch reads SAL.

The protein belongs to the TRAFAC class translation factor GTPase superfamily. Classic translation factor GTPase family. IF-2 subfamily.

Its subcellular location is the cytoplasm. Functionally, one of the essential components for the initiation of protein synthesis. Protects formylmethionyl-tRNA from spontaneous hydrolysis and promotes its binding to the 30S ribosomal subunits. Also involved in the hydrolysis of GTP during the formation of the 70S ribosomal complex. The polypeptide is Translation initiation factor IF-2 (Staphylococcus aureus (strain Mu3 / ATCC 700698)).